The chain runs to 404 residues: Serine/threonine-protein phosphatase 2A regulatory subunit rsa-1 (404 aa).

In terms of assembly, part of a complex consisting of a common heterodimeric core enzyme, composed of catalytic subunit let-92 and constant regulatory subunit paa-1, that associates with a variety of regulatory subunits which confer distinct properties to the holoenzyme. Interacts with rsa-2, spd-5 and tpxl-1.

Its subcellular location is the cytoplasm. The protein resides in the cytoskeleton. The protein localises to the microtubule organizing center. It localises to the centrosome. Functionally, regulatory subunit of phosphatase let-92 which recruits let-92/paa-1 complex to the centrosomes, thereby regulating microtubule outgrowth from centrosomes and mitotic spindle assembly ensuring the stability of kinetochore microtubules. The sequence is that of Serine/threonine-protein phosphatase 2A regulatory subunit rsa-1 from Caenorhabditis elegans.